The sequence spans 651 residues: Coiled-coil domain-containing protein 81 (651 aa).

The tract at residues 194–314 (LSSRESFGKR…PKTSPAPACQ (121 aa)) is disordered. A Phosphoserine modification is found at Ser206. 2 stretches are compositionally biased toward basic and acidic residues: residues 212-222 (RIEHKETENKP) and 232-250 (GENR…KEEG). Polar residues predominate over residues 265–275 (SISPAKVTSGS). Phosphoserine is present on residues Ser273, Ser275, Ser294, and Ser416. Coiled-coil stretches lie at residues 428–465 (SQSL…EELA) and 539–566 (KRNT…EHLA).

It is found in the cytoplasm. Its subcellular location is the cytoskeleton. The protein resides in the microtubule organizing center. It localises to the centrosome. This Rattus norvegicus (Rat) protein is Coiled-coil domain-containing protein 81 (Ccdc81).